The following is a 302-amino-acid chain: Pyridoxal 5'-phosphate synthase subunit PdxS (302 aa).

A D-ribose 5-phosphate-binding site is contributed by aspartate 32. The Schiff-base intermediate with D-ribose 5-phosphate role is filled by lysine 89. Residue glycine 161 coordinates D-ribose 5-phosphate. Position 173 (arginine 173) interacts with D-glyceraldehyde 3-phosphate. Residues glycine 222 and 243 to 244 (GS) each bind D-ribose 5-phosphate. Residues 275 to 302 (IAKNPGKGMKGQANADLDEEEQLQGRGV) form a disordered region.

Belongs to the PdxS/SNZ family. In terms of assembly, in the presence of PdxT, forms a dodecamer of heterodimers.

The enzyme catalyses aldehydo-D-ribose 5-phosphate + D-glyceraldehyde 3-phosphate + L-glutamine = pyridoxal 5'-phosphate + L-glutamate + phosphate + 3 H2O + H(+). Its pathway is cofactor biosynthesis; pyridoxal 5'-phosphate biosynthesis. Its function is as follows. Catalyzes the formation of pyridoxal 5'-phosphate from ribose 5-phosphate (RBP), glyceraldehyde 3-phosphate (G3P) and ammonia. The ammonia is provided by the PdxT subunit. Can also use ribulose 5-phosphate and dihydroxyacetone phosphate as substrates, resulting from enzyme-catalyzed isomerization of RBP and G3P, respectively. This chain is Pyridoxal 5'-phosphate synthase subunit PdxS, found in Haloarcula marismortui (strain ATCC 43049 / DSM 3752 / JCM 8966 / VKM B-1809) (Halobacterium marismortui).